A 489-amino-acid chain; its full sequence is Coronin-1B (489 aa).

S2 is modified (phosphoserine; by PKC). 6 WD repeats span residues 18–72 (QPVK…GRID), 73–122 (KAYP…SPLT), 123–166 (EPVV…GTAE), 167–210 (ELYR…RGTL), 211–256 (VAER…ENLE), and 257–296 (EPMALQELDSSNGALLPFYDPDTSVVYVCGKGDSSIRYFE). The tract at residues 408–444 (RRNVLSDSRPAMAPGSSHLGAPASTTTAADATPSGSL) is disordered. A compositionally biased stretch (low complexity) spans 428 to 441 (APASTTTAADATPS). Positions 449 to 474 (EAGKLEEVMQELRALRALVKEQGDRI) form a coiled coil.

The protein belongs to the WD repeat coronin family. Forms homooligomers, but does not form complexes with the other coronins. Interacts with Arp2/3 complex components, including ACTR2, ARPC1B and ARPC2. Binds actin. In terms of processing, phosphorylation by PKC on Ser-2 regulates the interaction with the Arp2/3 complex and cell motility in fibroblasts. Phosphorylation does not seem to affect subcellular location.

The protein resides in the cytoplasm. The protein localises to the cytoskeleton. It is found in the stress fiber. In terms of biological role, regulates leading edge dynamics and cell motility in fibroblasts. May be involved in cytokinesis and signal transduction. In Homo sapiens (Human), this protein is Coronin-1B (CORO1B).